Reading from the N-terminus, the 106-residue chain is Biogenesis of lysosome-related organelles complex 1 subunit 6 (106 aa).

Residues 78-106 (KKTSQLELSDTNIEDGSTTSTPTTTNKSQ) form a disordered region. Over residues 82–93 (QLELSDTNIEDG) the composition is skewed to polar residues. Residues 94–106 (STTSTPTTTNKSQ) show a composition bias toward low complexity.

The protein belongs to the BLOC1S6 family. Homodimer (isoform 1). Component of the biogenesis of lysosome-related organelles complex-1 (BLOC-1) composed at least of blos-1, blos-2, blos-4, dsbn-1, glo-2, mutd-1 and snpn-1. Isoform 1 interacts with blos-1 and blos-4.

It is found in the cytoplasm. It localises to the endosome. Functionally, component of the biogenesis of lysosome-related organelles complex-1 (BLOC-1) involved in gut granule biogenesis. This is Biogenesis of lysosome-related organelles complex 1 subunit 6 (glo-2) from Caenorhabditis elegans.